Reading from the N-terminus, the 350-residue chain is Nicotinate-nucleotide--dimethylbenzimidazole phosphoribosyltransferase (350 aa).

The active-site Proton acceptor is E317.

It belongs to the CobT family.

The enzyme catalyses 5,6-dimethylbenzimidazole + nicotinate beta-D-ribonucleotide = alpha-ribazole 5'-phosphate + nicotinate + H(+). The protein operates within nucleoside biosynthesis; alpha-ribazole biosynthesis; alpha-ribazole from 5,6-dimethylbenzimidazole: step 1/2. Catalyzes the synthesis of alpha-ribazole-5'-phosphate from nicotinate mononucleotide (NAMN) and 5,6-dimethylbenzimidazole (DMB). The sequence is that of Nicotinate-nucleotide--dimethylbenzimidazole phosphoribosyltransferase from Shewanella putrefaciens (strain CN-32 / ATCC BAA-453).